The following is a 771-amino-acid chain: MYPQGRHPAPHQPGQPGFKFTVAESCDRIKDEFQFLQAQYHSLKVEYDKLANEKTEMQRHYVMYYEMSYGLNIEMHKQTEIAKRLNAILAQIMPFLSQEHQQQVAQAVERAKQVTMTELNAIIGVRGLPNLPLTQQQLQAQHLSHAAHGPPVQLPPHPSGLQPPGIPPVTGSGSGLLALGALGSQAHLPVKDEKNHHDLEHRERESSTNNSVSPSDSLRASEKHRGSSEYSLDPKKRRVEEKDNMSRYDSDGDKSDDLVVDVSNEDPATPRVSPSHSPPENGLDKARALKKDAPNSPASVASSGSTPSSKAKDHPHNDKSSTPGLKSNTPTPRNDAPTPGTSNTPGLRPHPGKPPGMEALTAPALRTPLSIAPPYGTPFMMGHHPEMNGSLTSPGVYPGLHISPQMSAAAAAAYGRTHMPGFDPHPHMRAPVLPASLTSIPGGKPAYSFHVSADGQMQPVPFPPDALIGPGIPRHARQINTLSHGEVVCAVTISNPTRHVYTGGKGCVKIWDISQPGSKSPVSQLDCLNRDNYIRSCKLLPDGRTLIVGGEASTLTIWDLASQTPRIKAELTSSAPACYALAISPDAKVCFSCCSDGNIAVWDLHNQTLVRQFQGHTDGASCIDISHDGTKLWTGGLDNTVRSWDLREGRQLQQHDFTSQIFSLGYCPTGEWLAVGMESSNVEVLHHTKPDKYQLHLHESCVLSLKFAYCGKWFVSTGKDNLLNAWRTPYGASIFQSKESSSVLSCDISADDKYIVTGSGDKKATVYEVIY.

Residues 1 to 141 (MYPQGRHPAP…PLTQQQLQAQ (141 aa)) are q domain. The span at 137–148 (QLQAQHLSHAAH) shows a compositional bias: low complexity. 2 disordered regions span residues 137–174 (QLQA…GSGS) and 196–360 (HHDL…MEAL). A GP domain region spans residues 142–209 (HLSHAAHGPP…EHRERESSTN (68 aa)). Positions 196-206 (HHDLEHRERES) are enriched in basic and acidic residues. Over residues 207–217 (STNNSVSPSDS) the composition is skewed to low complexity. The tract at residues 210–278 (NSVSPSDSLR…TPRVSPSHSP (69 aa)) is ccN domain. Composition is skewed to basic and acidic residues over residues 219–257 (RASE…KSDD) and 282–293 (GLDKARALKKDA). The Nuclear localization signal motif lies at 235–238 (KKRR). The SP domain stretch occupies residues 279–451 (PENGLDKARA…GGKPAYSFHV (173 aa)). Positions 294 to 309 (PNSPASVASSGSTPSS) are enriched in low complexity. Residues Ser296 and Ser299 each carry the phosphoserine modification. The segment covering 310–319 (KAKDHPHNDK) has biased composition (basic and acidic residues). Over residues 320–332 (SSTPGLKSNTPTP) the composition is skewed to polar residues. WD repeat units follow at residues 483–521 (SHGE…SKSP), 529–568 (NRDN…PRIK), 573–612 (SSAP…LVRQ), 615–654 (GHTD…QLQQ), 656–695 (DFTS…KYQL), 697–736 (LHES…SIFQ), and 738–771 (KESS…EVIY).

This sequence belongs to the WD repeat Groucho/TLE family. As to expression, at gastrulation, expression is absent within the axial mesoderm. After gastrulation is complete, expressed in the presomitic mesoderm, but expression in the tailbud doesn't begin until the six to seven somite stage, after which it becomes abundant. Expression is abundant throughout somitogenesis within the posterior half of the somites, but is absent from older somites. Also expressed in a dynamic manner within the neural plate.

It is found in the nucleus. Transcriptional corepressor that binds to a number of transcription factors. Inhibits the transcriptional activation mediated by CTNNB1 and TCF family members in Wnt signaling. The effects of full-length TLE family members may be modulated by association with dominant-negative AES. In Danio rerio (Zebrafish), this protein is Transducin-like enhancer protein 3-B.